A 310-amino-acid polypeptide reads, in one-letter code: L-lactate dehydrogenase (310 aa).

NAD(+) is bound by residues Val11, Asp32, and Arg37. Residues Gln79, Arg85, and Asn117 to Asp120 contribute to the substrate site. Residues Val115 to Asn117 and Thr140 each bind NAD(+). Position 145-148 (Asp145–Arg148) interacts with substrate. Residues Arg150 and His165 each coordinate beta-D-fructose 1,6-bisphosphate. His172 functions as the Proton acceptor in the catalytic mechanism. Phosphotyrosine is present on Tyr221. Substrate is bound at residue Thr230.

Belongs to the LDH/MDH superfamily. LDH family. Homotetramer.

The protein localises to the cytoplasm. The enzyme catalyses (S)-lactate + NAD(+) = pyruvate + NADH + H(+). Its pathway is fermentation; pyruvate fermentation to lactate; (S)-lactate from pyruvate: step 1/1. With respect to regulation, allosterically activated by fructose 1,6-bisphosphate (FBP). Functionally, catalyzes the conversion of lactate to pyruvate. The sequence is that of L-lactate dehydrogenase from Fervidobacterium nodosum (strain ATCC 35602 / DSM 5306 / Rt17-B1).